Here is a 200-residue protein sequence, read N- to C-terminus: WASH complex subunit 3 (200 aa).

The stretch at 56-76 forms a coiled coil; that stretch reads SLRIQQIETTLSILEAKLASI. Disordered stretches follow at residues 87–130 and 165–200; these read VRAP…AENI and DPNL…SFSD.

The protein belongs to the CCDC53 family. In terms of assembly, component of the WASH complex.

The chain is WASH complex subunit 3 from Danio rerio (Zebrafish).